Consider the following 354-residue polypeptide: Protein OVEREXPRESSOR OF CATIONIC PEROXIDASE 3 (354 aa).

The Nuclear localization signal 1 signature appears at 63 to 70 (NRKGFVSS). Disordered regions lie at residues 65–98 (KGFV…EDPF) and 151–186 (TGDV…PTKL). Residues 154–181 (VDVDVDNDDDDNDDDDNDDDDDDSEEDE) are compositionally biased toward acidic residues. The Nuclear localization signal 2 motif lies at 191 to 198 (LKRLAYAL). The disordered stretch occupies residues 243–264 (KPPVAAPENSSPDPSPVESLSA). A DNA-binding region (homeobox) is located at residues 286–345 (RWSAQKRVKKAHIETLEKVYRRSKRPTNAVVSSIVQVTNLPRKRVLKWFEDKRAEDGVPD). A Nuclear localization signal 3 motif is present at residues 293–300 (VKKAHIET).

The protein resides in the nucleus. In terms of biological role, may modulate chromatin structure by regulation of nucleosome assembly/disassembly. Homeodomain transcription factor that mediates jasmonic acid (JA)-mediated COI1-dependent and abscisic acid (ABA)-mediated PMR4-dependent resistance to infection by necrotrophic fungal pathogens (e.g. B.cinerea and P.cucumerina) and bacterial pathogens (e.g. P.syringae DC3000); this resistance involves at least callose deposition. Required for the P.fluorescens WCS417r-triggered JA-dependent induced systemic resistance (ISR) against both P.syringae DC3000 and H.arabidopsidis. Negative regulator of the ABA-dependent drought resistance. This chain is Protein OVEREXPRESSOR OF CATIONIC PEROXIDASE 3, found in Arabidopsis thaliana (Mouse-ear cress).